The chain runs to 312 residues: MIEFEKPNITVVEQEDSYGKFVVEPLERGFGTTLGNSLRRVLLTSIPGTGLVYVQIDGVLHEFSTVPGVREDVTKIILNLKKLELKSLSDERKVIELDVEGPATVTADDLKVDADVQVLNPDQYICTIAEGGHLHMEIAVQNGRGYVAASDNKSDDMPIGVIPVDSLFSPIKKVNYQVESTRVGKRDDFDKLTFEIWTDGSIKPNDALSFAAKILVEHFKVFESADADTKFSEVMVEKEDDKKEKKLEMTIEELDLSVRSYNCLKRAGINTLQELTDMTESDMMRVRNLGRKSLEEVKNKLTDLGLSLRQED.

An alpha N-terminal domain (alpha-NTD) region spans residues 1–225 (MIEFEKPNIT…VEHFKVFESA (225 aa)). The interval 243 to 312 (KEKKLEMTIE…DLGLSLRQED (70 aa)) is alpha C-terminal domain (alpha-CTD).

Belongs to the RNA polymerase alpha chain family. In terms of assembly, homodimer. The RNAP catalytic core consists of 2 alpha, 1 beta, 1 beta' and 1 omega subunit. When a sigma factor is associated with the core the holoenzyme is formed, which can initiate transcription.

It catalyses the reaction RNA(n) + a ribonucleoside 5'-triphosphate = RNA(n+1) + diphosphate. Its function is as follows. DNA-dependent RNA polymerase catalyzes the transcription of DNA into RNA using the four ribonucleoside triphosphates as substrates. The sequence is that of DNA-directed RNA polymerase subunit alpha from Lactobacillus helveticus (strain DPC 4571).